An 86-amino-acid polypeptide reads, in one-letter code: Small ribosomal subunit protein uS17 (86 aa).

It belongs to the universal ribosomal protein uS17 family. Part of the 30S ribosomal subunit.

Functionally, one of the primary rRNA binding proteins, it binds specifically to the 5'-end of 16S ribosomal RNA. The protein is Small ribosomal subunit protein uS17 of Dehalococcoides mccartyi (strain ATCC BAA-2266 / KCTC 15142 / 195) (Dehalococcoides ethenogenes (strain 195)).